A 288-amino-acid chain; its full sequence is ATP synthase gamma chain (288 aa).

This sequence belongs to the ATPase gamma chain family. F-type ATPases have 2 components, CF(1) - the catalytic core - and CF(0) - the membrane proton channel. CF(1) has five subunits: alpha(3), beta(3), gamma(1), delta(1), epsilon(1). CF(0) has three main subunits: a, b and c.

The protein localises to the cell inner membrane. Produces ATP from ADP in the presence of a proton gradient across the membrane. The gamma chain is believed to be important in regulating ATPase activity and the flow of protons through the CF(0) complex. The polypeptide is ATP synthase gamma chain (Aliivibrio fischeri (strain ATCC 700601 / ES114) (Vibrio fischeri)).